Reading from the N-terminus, the 436-residue chain is MFDSTLNPLWQRYILAVQEEVKPALGCTEPISLALAASVAAAELEGPVERVEAWVSPNLMKNGLGVTVPGTGMVGLPIAAALGALGGNANAGLEVLKDATAQAIADAKALLAAGKVSVKIQEPCNEILFSRAKVWNGEKWACVTIVGGHTNIVHIETHDGVVFTQQACVAEGEQESPLSVLSRTTLAEILKFVNEVQFAAIRFILDSAKLNCALSQEGLSGNWGLHIGATLEKQCERGLLAKDLSSSIVIRTSAASDARMGGATLPAMSNSGSGNQGITATMPVVVVAEHFGADDERLARALMLLHLSAIYIHNQLPRLSALCAATTAAMGAAAGMAWLVDGRYETISMAISSMIGDVSGMICDGASNSCAMKVSTSASAAWKAVLMALDDTAVTGNEGIVAHDVEQSIANLCALASHSMQQTDRQIIEIMASKAR.

The protein belongs to the UPF0597 family.

In Shigella dysenteriae serotype 1 (strain Sd197), this protein is UPF0597 protein YhaM.